A 2251-amino-acid chain; its full sequence is U3 small nucleolar RNA-associated protein 10 (2251 aa).

Residues 945–983 (VVPLLLTALADAEAAIRLAAIACLAHILAICKYAGDLAK) form an HEAT repeat. A run of 2 helical transmembrane segments spans residues 962–982 (LAAI…GDLA) and 1460–1480 (LLVD…LLVD).

Belongs to the HEATR1/UTP10 family. As to quaternary structure, component of the ribosomal small subunit (SSU) processome.

The protein localises to the nucleus. It is found in the nucleolus. It localises to the membrane. In terms of biological role, involved in nucleolar processing of pre-18S ribosomal RNA. Involved in ribosome biosynthesis. This chain is U3 small nucleolar RNA-associated protein 10, found in Mycosarcoma maydis (Corn smut fungus).